The following is a 519-amino-acid chain: NADH dehydrogenase (519 aa).

Residues Met1–Gly183 are membrane-binding. Positions Arg184–Lys519 are catalytic. Asp210–Phe241 contributes to the FAD binding site. Cys337 and Cys340 are oxidised to a cystine. Asp349–Met379 provides a ligand contact to NAD(+). Thr469–Asp479 is a binding site for FAD.

This sequence belongs to the class-II pyridine nucleotide-disulfide oxidoreductase family. Homodimer. FAD is required as a cofactor.

It is found in the cell membrane. It catalyses the reaction a ubiquinone + NADH + 5 H(+)(in) = a ubiquinol + NAD(+) + 4 H(+)(out). In terms of biological role, transfer of electrons from NADH to the respiratory chain. The immediate electron acceptor for the enzyme is believed to be ubiquinone. This chain is NADH dehydrogenase (ahpF), found in Ferdinandcohnia aciditolerans (strain JCM 32973 / CCTCC AB 2017280 / YN-1) (Bacillus aciditolerans).